A 338-amino-acid polypeptide reads, in one-letter code: MQTTVEPIRGTNDPVQSLELSLVVPIFNEEQSVGPLVERVAAAMVSYPHRWELILVDDGSTDATLVNARKYVGREGLALRIVELQRNFGQTAAMQAGIDTARGRLIATMDGDLQNDPKDIPSMVSELERRELDLLVGWRKNRKDGLFLRKIPSWCANYLIGRITGVKLHDYGCSLKIYRASIIKQVKLMGEMHRFIPAWVAGVVPSSRIGEMAVTHHAREHGVSKYGISRTFRVILDLLSVMFFMRYKARPGHFFGSLGLGLGALAMLILLYLGFDKFILGNDIGTRPMLMVGVVLLLSSVQMITTGILAEMIARTYYRDDASPNYIVRQIFDDQSQA.

A run of 2 helical transmembrane segments spans residues 254–274 (FFGS…LYLG) and 289–309 (MLMV…TGIL).

This sequence belongs to the glycosyltransferase 2 family.

The protein localises to the cell membrane. The enzyme catalyses di-trans,nona-cis-dodecaprenyl phosphate + UDP-alpha-D-galacturonate = beta-D-galacturonosyl di-trans,nona-cis-dodecaprenyl phosphate + UDP. Glycosyltransferase that catalyzes the synthesis of dodecaprenyl-phosphate galacturonate (Dod-P-GalA), likely from UDP-GalA and dodecaprenyl-phosphate. Dod-P-GalA is the lipid donor required for GalA transfer to lipopolysaccharide (LPS) specific residues catalyzed by the GalA transferases RgtA, RgtB, RgtC and RgtD. In Rhizobium johnstonii (strain DSM 114642 / LMG 32736 / 3841) (Rhizobium leguminosarum bv. viciae), this protein is Dodecaprenyl-phosphate galacturonate synthase.